Consider the following 271-residue polypeptide: Thiosulfate sulfurtransferase (271 aa).

Rhodanese domains follow at residues 21–129 and 159–270; these read SAPE…PLSR and GAAD…TPVE. Catalysis depends on Cys230, which acts as the Cysteine persulfide intermediate. Arg235 contacts substrate.

Its subcellular location is the cytoplasm. The enzyme catalyses thiosulfate + hydrogen cyanide = thiocyanate + sulfite + 2 H(+). The chain is Thiosulfate sulfurtransferase (rhdA) from Azotobacter vinelandii.